Consider the following 771-residue polypeptide: DNA helicase/primase complex-associated protein (771 aa).

This sequence belongs to the herpesviridae HEPA family. As to quaternary structure, associates with the primase and the helicase to form the helicase-primase complex. Interacts with the origin-binding protein. Interacts with the polymerase catalytic subunit.

It is found in the host nucleus. Component of the helicase/primase complex. Unwinds the DNA at the replication forks and generates single-stranded DNA for both leading and lagging strand synthesis. The primase synthesizes short RNA primers on the lagging strand that the polymerase presumably elongates using dNTPs. The primase-associated factor has no known catalytic activity in the complex and may serve to facilitate the formation of the replisome by directly interacting with the origin-binding protein and the polymerase. The protein is DNA helicase/primase complex-associated protein of Varicella-zoster virus (strain Oka vaccine) (HHV-3).